Here is a 327-residue protein sequence, read N- to C-terminus: Phospho-N-acetylmuramoyl-pentapeptide-transferase (327 aa).

10 consecutive transmembrane segments (helical) span residues 3-23 (TAII…PAFI), 51-71 (TMGG…IALF), 79-99 (VTTI…DDFL), 115-135 (LFLQ…HGGG), 140-160 (VFGF…FWLV), 172-192 (IDGL…VIAL), 197-217 (FDLL…FGFN), 223-243 (IFMG…LSIA), 248-268 (WTLL…MLQV), and 306-326 (VDFL…AILY).

It belongs to the glycosyltransferase 4 family. MraY subfamily. Mg(2+) is required as a cofactor.

The protein localises to the cell membrane. The catalysed reaction is UDP-N-acetyl-alpha-D-muramoyl-L-alanyl-gamma-D-glutamyl-L-lysyl-D-alanyl-D-alanine + di-trans,octa-cis-undecaprenyl phosphate = Mur2Ac(oyl-L-Ala-gamma-D-Glu-L-Lys-D-Ala-D-Ala)-di-trans,octa-cis-undecaprenyl diphosphate + UMP. It functions in the pathway cell wall biogenesis; peptidoglycan biosynthesis. Functionally, catalyzes the initial step of the lipid cycle reactions in the biosynthesis of the cell wall peptidoglycan: transfers peptidoglycan precursor phospho-MurNAc-pentapeptide from UDP-MurNAc-pentapeptide onto the lipid carrier undecaprenyl phosphate, yielding undecaprenyl-pyrophosphoryl-MurNAc-pentapeptide, known as lipid I. This chain is Phospho-N-acetylmuramoyl-pentapeptide-transferase, found in Streptococcus gordonii (strain Challis / ATCC 35105 / BCRC 15272 / CH1 / DL1 / V288).